The sequence spans 423 residues: Adenylosuccinate synthetase (423 aa).

The active-site Proton acceptor is the D12. D12 and G39 together coordinate Mg(2+). Residues 37 to 40, T129, R143, N221, T236, and R300 contribute to the IMP site; that span reads NAGH. 39–41 serves as a coordination point for GTP; the sequence is GHS. Residue H40 is the Proton donor of the active site. Residue 296-302 coordinates substrate; the sequence is VSTGRKR. Residues R302, 328–330, and 412–414 contribute to the GTP site; these read KLD and GTG.

This sequence belongs to the adenylosuccinate synthetase family. Homodimer. Mg(2+) serves as cofactor.

It is found in the cytoplasm. The enzyme catalyses IMP + L-aspartate + GTP = N(6)-(1,2-dicarboxyethyl)-AMP + GDP + phosphate + 2 H(+). Its pathway is purine metabolism; AMP biosynthesis via de novo pathway; AMP from IMP: step 1/2. Plays an important role in the de novo pathway and in the salvage pathway of purine nucleotide biosynthesis. Catalyzes the first committed step in the biosynthesis of AMP from IMP. In Pyricularia oryzae (strain 70-15 / ATCC MYA-4617 / FGSC 8958) (Rice blast fungus), this protein is Adenylosuccinate synthetase.